The chain runs to 772 residues: Ion-translocating oxidoreductase complex subunit C (772 aa).

4Fe-4S ferredoxin-type domains are found at residues 369-397 (GEPQ…QQLY) and 407-436 (KATT…VQYF). Cys-377, Cys-380, Cys-383, Cys-387, Cys-416, Cys-419, Cys-422, and Cys-426 together coordinate [4Fe-4S] cluster. Disordered stretches follow at residues 602 to 684 (KLEQ…DPRK), 696 to 717 (ARKL…PRKA), and 727 to 746 (KARK…QVDP). Residues 605 to 615 (QQQANAEPEQQ) show a composition bias toward low complexity.

Belongs to the 4Fe4S bacterial-type ferredoxin family. RnfC subfamily. The complex is composed of six subunits: RsxA, RsxB, RsxC, RsxD, RsxE and RsxG. It depends on [4Fe-4S] cluster as a cofactor.

The protein localises to the cell inner membrane. Its function is as follows. Part of a membrane-bound complex that couples electron transfer with translocation of ions across the membrane. Required to maintain the reduced state of SoxR. The polypeptide is Ion-translocating oxidoreductase complex subunit C (Escherichia coli O157:H7 (strain EC4115 / EHEC)).